A 199-amino-acid chain; its full sequence is Fe/S biogenesis protein NfuA (199 aa).

[4Fe-4S] cluster contacts are provided by cysteine 151 and cysteine 154.

This sequence belongs to the NfuA family. Homodimer. The cofactor is [4Fe-4S] cluster.

Involved in iron-sulfur cluster biogenesis. Binds a 4Fe-4S cluster, can transfer this cluster to apoproteins, and thereby intervenes in the maturation of Fe/S proteins. Could also act as a scaffold/chaperone for damaged Fe/S proteins. The protein is Fe/S biogenesis protein NfuA of Xanthomonas euvesicatoria pv. vesicatoria (strain 85-10) (Xanthomonas campestris pv. vesicatoria).